The chain runs to 402 residues: Major outer membrane porin (402 aa).

The signal sequence occupies residues 1-22 (MKKLLKSALLFAATGSALSLQA).

Belongs to the chlamydial porin (CP) (TC 1.B.2) family. In terms of assembly, part of a disulfide cross-linked outer membrane complex (COMC) composed of the major outer membrane porin, the small cysteine-rich protein (OmcA) and the large cysteine-rich periplasmic protein (OmcB).

Its subcellular location is the cell outer membrane. Its function is as follows. In elementary bodies (EBs, the infectious stage, which is able to survive outside the host cell) provides the structural integrity of the outer envelope through disulfide cross-links with the small cysteine-rich protein and the large cysteine-rich periplasmic protein. It has been described in publications as the Sarkosyl-insoluble COMC (Chlamydia outer membrane complex), and serves as the functional equivalent of peptidoglycan. Permits diffusion of specific solutes through the outer membrane. In Chlamydia psittaci (Chlamydophila psittaci), this protein is Major outer membrane porin (ompA).